Reading from the N-terminus, the 225-residue chain is Urease subunit alpha (225 aa).

A urease gamma region spans residues 1–102 (MRLTPKELDK…LVTIHNPIED (102 aa)). The tract at residues 103 to 225 (NGKLTPGEYI…ANAAQKHFIH (123 aa)) is urease beta.

It in the N-terminal section; belongs to the urease gamma subunit family. In the C-terminal section; belongs to the urease beta subunit family. Heterohexamer of 3 UreA (alpha) and 3 UreB (beta) subunits.

The protein resides in the cytoplasm. The catalysed reaction is urea + 2 H2O + H(+) = hydrogencarbonate + 2 NH4(+). It participates in nitrogen metabolism; urea degradation; CO(2) and NH(3) from urea (urease route): step 1/1. In Helicobacter hepaticus (strain ATCC 51449 / 3B1), this protein is Urease subunit alpha.